Here is a 294-residue protein sequence, read N- to C-terminus: Glyceraldehyde-3-phosphate dehydrogenase (294 aa).

3 residues coordinate NAD(+): aspartate 19, arginine 63, and threonine 105. D-glyceraldehyde 3-phosphate-binding positions include 134–136 (SCT), threonine 165, 194–195 (TG), and arginine 217. The active-site Nucleophile is the cysteine 135.

The protein belongs to the glyceraldehyde-3-phosphate dehydrogenase family. As to quaternary structure, homotetramer.

Its subcellular location is the cytoplasm. The catalysed reaction is D-glyceraldehyde 3-phosphate + phosphate + NAD(+) = (2R)-3-phospho-glyceroyl phosphate + NADH + H(+). It participates in carbohydrate degradation; glycolysis; pyruvate from D-glyceraldehyde 3-phosphate: step 1/5. Functionally, catalyzes the oxidative phosphorylation of glyceraldehyde 3-phosphate (G3P) to 1,3-bisphosphoglycerate (BPG) using the cofactor NAD. The first reaction step involves the formation of a hemiacetal intermediate between G3P and a cysteine residue, and this hemiacetal intermediate is then oxidized to a thioester, with concomitant reduction of NAD to NADH. The reduced NADH is then exchanged with the second NAD, and the thioester is attacked by a nucleophilic inorganic phosphate to produce BPG. The chain is Glyceraldehyde-3-phosphate dehydrogenase (gap) from Shimwellia blattae (Escherichia blattae).